The chain runs to 21 residues: Cupiennin-6c (21 aa).

Ser21 carries the serine amide modification.

As to expression, expressed by the venom gland.

It is found in the secreted. This is Cupiennin-6c from Cupiennius salei (American wandering spider).